We begin with the raw amino-acid sequence, 98 residues long: NADH-ubiquinone oxidoreductase chain 4L (98 aa).

3 helical membrane-spanning segments follow: residues 1-21 (MSLV…GLLM), 29-49 (SLLC…LTIL), and 61-81 (IILL…LVMV).

Belongs to the complex I subunit 4L family. As to quaternary structure, core subunit of respiratory chain NADH dehydrogenase (Complex I) which is composed of 45 different subunits.

It is found in the mitochondrion inner membrane. The catalysed reaction is a ubiquinone + NADH + 5 H(+)(in) = a ubiquinol + NAD(+) + 4 H(+)(out). Core subunit of the mitochondrial membrane respiratory chain NADH dehydrogenase (Complex I) which catalyzes electron transfer from NADH through the respiratory chain, using ubiquinone as an electron acceptor. Part of the enzyme membrane arm which is embedded in the lipid bilayer and involved in proton translocation. The chain is NADH-ubiquinone oxidoreductase chain 4L (MT-ND4L) from Muntiacus vuquangensis (Giant muntjac).